The primary structure comprises 409 residues: Toluene 1,2-dioxygenase system ferredoxin--NAD(+) reductase component (409 aa).

4–35 lines the FAD pocket; it reads HVAIIGNGVGGFTTAQALRAEGFEGRISLIGD. An NAD(+)-binding site is contributed by 145-173; that stretch reads RLLIVGGGLIGCEVATTARKLGLSVTILE.

The protein belongs to the bacterial ring-hydroxylating dioxygenase ferredoxin reductase family. This dioxygenase system consists of four proteins: the two subunits of the hydroxylase component (todC1 and todC2), a ferredoxin (TodB) and a ferredoxin reductase (TodA). The cofactor is FAD.

It carries out the reaction 2 reduced [2Fe-2S]-[ferredoxin] + NAD(+) + H(+) = 2 oxidized [2Fe-2S]-[ferredoxin] + NADH. The protein operates within xenobiotic degradation; toluene degradation. Part of the electron transfer component of toluene 1,2-dioxygenase, transfers electrons from ferredoxin (TodB) to NADH. The protein is Toluene 1,2-dioxygenase system ferredoxin--NAD(+) reductase component (todA) of Pseudomonas putida (Arthrobacter siderocapsulatus).